A 348-amino-acid polypeptide reads, in one-letter code: Heat-inducible transcription repressor HrcA (348 aa).

Belongs to the HrcA family.

In terms of biological role, negative regulator of class I heat shock genes (grpE-dnaK-dnaJ and groELS operons). Prevents heat-shock induction of these operons. The polypeptide is Heat-inducible transcription repressor HrcA (Syntrophobacter fumaroxidans (strain DSM 10017 / MPOB)).